The sequence spans 146 residues: MKGSPISQFSKTSINALTRPWKKYRDGELFYGLSKVGNKRVPLTTKQGNKTMYKGTRASGIGRHTKFGGYVINWKKVRTYVTPDMVNFELKPYVNANVPPLKHEFKGFSGGPLDPRLQLLKIKEYIVNGRVQSEGATDTSCYKERG.

A mitochondrion-targeting transit peptide spans 1 to 16; it reads MKGSPISQFSKTSINA.

The protein belongs to the mitochondrion-specific ribosomal protein mL41 family. As to quaternary structure, component of the mitochondrial large ribosomal subunit (mt-LSU). Mature yeast 74S mitochondrial ribosomes consist of a small (37S) and a large (54S) subunit. The 37S small subunit contains a 15S ribosomal RNA (15S mt-rRNA) and 34 different proteins. The 54S large subunit contains a 21S rRNA (21S mt-rRNA) and 46 different proteins.

It localises to the mitochondrion. Component of the mitochondrial ribosome (mitoribosome), a dedicated translation machinery responsible for the synthesis of mitochondrial genome-encoded proteins, including at least some of the essential transmembrane subunits of the mitochondrial respiratory chain. The mitoribosomes are attached to the mitochondrial inner membrane and translation products are cotranslationally integrated into the membrane. The chain is Large ribosomal subunit protein mL41 (MRPL27) from Saccharomyces cerevisiae (strain ATCC 204508 / S288c) (Baker's yeast).